We begin with the raw amino-acid sequence, 294 residues long: MTNFGRVITAMVTPFTPEGEVNYSVAEQLAGHLVEHGSEGLVICGTTGESPTLSWDEEFQLFRTVQQAVAGKAKIIAGTGSNSTHEAIAASQKAAQLGLDGALLVVPYYNKPPQEGLYQHFRAIAQAVPEFPLMLYNIPGRTGQNLLPETIARLAELPNIVAIKEASGNLDQASQIRQLTPTEFAIYSGDDSLTLPLLAVGGVGVVSVASHLVGDQLQQMIRAFTAGQVDVAQTIHTQLLPLFKALFVTTNPIPIKAALQLQGWAVGNLRLPLVSADAATQEMLRSLLQSLNLL.

T47 contributes to the pyruvate binding site. Y136 acts as the Proton donor/acceptor in catalysis. The active-site Schiff-base intermediate with substrate is the K164. A pyruvate-binding site is contributed by V206.

Belongs to the DapA family. In terms of assembly, homotetramer; dimer of dimers.

The protein localises to the cytoplasm. The catalysed reaction is L-aspartate 4-semialdehyde + pyruvate = (2S,4S)-4-hydroxy-2,3,4,5-tetrahydrodipicolinate + H2O + H(+). It participates in amino-acid biosynthesis; L-lysine biosynthesis via DAP pathway; (S)-tetrahydrodipicolinate from L-aspartate: step 3/4. Catalyzes the condensation of (S)-aspartate-beta-semialdehyde [(S)-ASA] and pyruvate to 4-hydroxy-tetrahydrodipicolinate (HTPA). This Cyanothece sp. (strain PCC 7425 / ATCC 29141) protein is 4-hydroxy-tetrahydrodipicolinate synthase.